The following is a 211-amino-acid chain: LexA repressor (211 aa).

A DNA-binding region (H-T-H motif) is located at residues 27 to 47 (QTEIARAFGFKGVRAVQHHLD). Catalysis depends on for autocatalytic cleavage activity residues serine 131 and lysine 168.

It belongs to the peptidase S24 family. Homodimer.

It carries out the reaction Hydrolysis of Ala-|-Gly bond in repressor LexA.. In terms of biological role, represses a number of genes involved in the response to DNA damage (SOS response), including recA and lexA. In the presence of single-stranded DNA, RecA interacts with LexA causing an autocatalytic cleavage which disrupts the DNA-binding part of LexA, leading to derepression of the SOS regulon and eventually DNA repair. This Xylella fastidiosa (strain M23) protein is LexA repressor.